Here is a 71-residue protein sequence, read N- to C-terminus: ATP synthase subunit c (71 aa).

Transmembrane regions (helical) follow at residues 5 to 25 and 46 to 66; these read VLAA…IGIA and FFIL…VMAF.

The protein belongs to the ATPase C chain family. As to quaternary structure, F-type ATPases have 2 components, F(1) - the catalytic core - and F(0) - the membrane proton channel. F(1) has five subunits: alpha(3), beta(3), gamma(1), delta(1), epsilon(1). F(0) has three main subunits: a(1), b(2) and c(10-14). The alpha and beta chains form an alternating ring which encloses part of the gamma chain. F(1) is attached to F(0) by a central stalk formed by the gamma and epsilon chains, while a peripheral stalk is formed by the delta and b chains.

Its subcellular location is the cell membrane. F(1)F(0) ATP synthase produces ATP from ADP in the presence of a proton or sodium gradient. F-type ATPases consist of two structural domains, F(1) containing the extramembraneous catalytic core and F(0) containing the membrane proton channel, linked together by a central stalk and a peripheral stalk. During catalysis, ATP synthesis in the catalytic domain of F(1) is coupled via a rotary mechanism of the central stalk subunits to proton translocation. Functionally, key component of the F(0) channel; it plays a direct role in translocation across the membrane. A homomeric c-ring of between 10-14 subunits forms the central stalk rotor element with the F(1) delta and epsilon subunits. The sequence is that of ATP synthase subunit c from Clostridium beijerinckii (strain ATCC 51743 / NCIMB 8052) (Clostridium acetobutylicum).